The primary structure comprises 96 residues: Cytochrome c-553 (96 aa).

Positions 1–19 (MKKVIMALGVLAFANALMA) are cleaved as a signal peptide. Residues C29, C32, H33, and M73 each coordinate heme c.

It belongs to the cytochrome c family. Binds 1 heme c group covalently per subunit.

Its subcellular location is the periplasm. In terms of biological role, natural electron acceptor for a formate dehydrogenase. This is Cytochrome c-553 from Helicobacter pylori (strain ATCC 700392 / 26695) (Campylobacter pylori).